The primary structure comprises 370 residues: uncharacterized protein (370 aa).

A divalent metal cation is bound by residues aspartate 152, histidine 154, aspartate 184, asparagine 215, histidine 306, and histidine 308.

The protein belongs to the metallophosphoesterase superfamily. Requires a divalent metal cation as cofactor.

This is an uncharacterized protein from Helicobacter pylori (strain J99 / ATCC 700824) (Campylobacter pylori J99).